A 472-amino-acid polypeptide reads, in one-letter code: Chromosomal replication initiator protein DnaA (472 aa).

Residues 1 to 73 are domain I, interacts with DnaA modulators; sequence MSNMEHDRWS…LTCWQAEMPE (73 aa). The domain II stretch occupies residues 73–128; sequence EVCRIDLTVRSPMRAAVTKEAPAPAEHRRDEHRPAADARSHAAAPAPSNHDALGGS. Residues 89-127 are disordered; sequence VTKEAPAPAEHRRDEHRPAADARSHAAAPAPSNHDALGG. The span at 97–112 shows a compositional bias: basic and acidic residues; the sequence is AEHRRDEHRPAADARS. Positions 113–124 are enriched in low complexity; sequence HAAAPAPSNHDA. A domain III, AAA+ region region spans residues 129–351; sequence PLDPRLTFAS…GAINRLLAHS (223 aa). Residues G176, G178, K179, and T180 each coordinate ATP. The domain IV, binds dsDNA stretch occupies residues 352–472; that stretch reads KLNAQPVTLE…VESLKRQLQE (121 aa).

The protein belongs to the DnaA family. As to quaternary structure, oligomerizes as a right-handed, spiral filament on DNA at oriC.

The protein localises to the cytoplasm. Functionally, plays an essential role in the initiation and regulation of chromosomal replication. ATP-DnaA binds to the origin of replication (oriC) to initiate formation of the DNA replication initiation complex once per cell cycle. Binds the DnaA box (a 9 base pair repeat at the origin) and separates the double-stranded (ds)DNA. Forms a right-handed helical filament on oriC DNA; dsDNA binds to the exterior of the filament while single-stranded (ss)DNA is stabiized in the filament's interior. The ATP-DnaA-oriC complex binds and stabilizes one strand of the AT-rich DNA unwinding element (DUE), permitting loading of DNA polymerase. After initiation quickly degrades to an ADP-DnaA complex that is not apt for DNA replication. Binds acidic phospholipids. This Rhodopseudomonas palustris (strain BisB5) protein is Chromosomal replication initiator protein DnaA.